We begin with the raw amino-acid sequence, 194 residues long: Cation channel sperm-associated auxiliary subunit zeta (194 aa).

Component of the CatSper complex or CatSpermasome composed of the core pore-forming members CATSPER1, CATSPER2, CATSPER3 and CATSPER4 as well as auxiliary members CATSPERB, CATSPERG2, CATSPERD, CATSPERE, CATSPERZ, C2CD6/CATSPERT, SLCO6C1, TMEM249, TMEM262 and EFCAB9. HSPA1 may be an additional auxiliary complex member. The core complex members CATSPER1, CATSPER2, CATSPER3 and CATSPER4 form a heterotetrameric channel. The auxiliary CATSPERB, CATSPERG2, CATSPERD and CATSPERE subunits form a pavilion-like structure over the pore which stabilizes the complex through interactions with CATSPER4, CATSPER3, CATSPER1 and CATSPER2 respectively. SLCO6C1 interacts with CATSPERE and TMEM262/CATSPERH interacts with CATSPERB, further stabilizing the complex. C2CD6/CATSPERT interacts at least with CATSPERD and is required for targeting the CatSper complex in the flagellar membrane. Interacts with EFCAB9; the interaction is direct, Ca(2+)-dependent and connects EFCAB9 with the CatSper complex. Dissociates from EFCAB9 at elevated pH. In terms of tissue distribution, testis-specific. Expressed in adult but not in fetal testis. Not expressed in ovary. Within testis, expression is restricted to spermatids.

The protein localises to the cell projection. It localises to the cilium. The protein resides in the flagellum membrane. In terms of biological role, auxiliary component of the CatSper complex, a complex involved in sperm cell hyperactivation. Sperm cell hyperactivation is needed for sperm motility which is essential late in the preparation of sperm for fertilization. Required for a distribution of the CatSper complex in linear quadrilateral nanodomains along the flagellum, maximizing fertilization inside the mammalian female reproductive tract. Together with EFCAB9, associates with the CatSper channel pore and is required for the two-row structure of each single CatSper channel. The polypeptide is Cation channel sperm-associated auxiliary subunit zeta (Mus musculus (Mouse)).